A 387-amino-acid polypeptide reads, in one-letter code: Decapping nuclease RAI1 (387 aa).

Glu-172 serves as a coordination point for a divalent metal cation. The residue at position 198 (Ser-198) is a Phosphoserine. Position 221 (Glu-221) interacts with substrate. Asp-223, Glu-241, and Leu-242 together coordinate a divalent metal cation. Substrate contacts are provided by Lys-243 and Gln-267. The interaction with RAT1 stretch occupies residues 273–387 (IPRIIYGFKD…GFKEWRKSLK (115 aa)).

Belongs to the DXO/Dom3Z family. Interacts with RAT1, RTT103 and pre-60S ribosomal subunits. Interacts with RAT1; the interaction is direct, stabilizes RAT1 protein structure and stimulates its exoribonuclease activity. The interaction also stimulates RAI1 pyrophosphohydrolase activity, probably by recruiting it to mRNA substrates. The cofactor is a divalent metal cation.

Its subcellular location is the nucleus. It carries out the reaction a 5'-end NAD(+)-phospho-ribonucleoside in mRNA + H2O = a 5'-end phospho-ribonucleoside in mRNA + NAD(+) + H(+). The enzyme catalyses a 5'-end (N(7)-methyl 5'-triphosphoguanosine)-ribonucleoside-ribonucleotide in mRNA + H2O = a (N(7)-methyl 5'-triphosphoguanosine)-nucleoside + a 5'-end phospho-ribonucleoside in mRNA + H(+). The catalysed reaction is a 5'-end triphospho-ribonucleoside in mRNA + H2O = a 5'-end phospho-ribonucleoside in mRNA + diphosphate + H(+). Decapping enzyme for NAD-capped RNAs: specifically hydrolyzes the nicotinamide adenine dinucleotide (NAD) cap from a subset of RNAs by removing the entire NAD moiety from the 5'-end of an NAD-capped RNA. The NAD-cap is present at the 5'-end of some RNAs and snoRNAs. In contrast to the canonical 5'-end N7 methylguanosine (m7G) cap, the NAD cap promotes mRNA decay. Also acts as a non-canonical decapping enzyme that removes the entire cap structure of m7G capped or incompletely capped RNAs. Has decapping activity toward incomplete 5'-end m7G cap mRNAs such as unmethylated 5'-end-capped RNA (cap0), while it has no activity toward 2'-O-ribose methylated m7G cap (cap1). Also possesses RNA 5'-pyrophosphohydrolase activity by hydrolyzing the 5'-end triphosphate to release pyrophosphates. Stimulates exoribonuclease activity of RAT1, allowing it to degrade RNAs with stable secondary structure more effectively. Required for the processing of nuclear mRNA and rRNA precursors. May promote termination of transcription by RNA polymerase II. The polypeptide is Decapping nuclease RAI1 (Saccharomyces cerevisiae (strain ATCC 204508 / S288c) (Baker's yeast)).